Reading from the N-terminus, the 567-residue chain is Protein NRT1/ PTR FAMILY 4.5 (567 aa).

The next 12 helical transmembrane spans lie at Gly-30–Ala-50, Ser-70–Ala-92, Phe-99–Ile-118, Ala-147–Leu-167, Phe-189–Val-209, Trp-219–Ser-239, Ile-326–Gln-346, Val-374–Phe-394, Ile-411–Lys-431, Leu-448–Phe-468, Ser-491–Val-511, and Leu-535–Ala-555.

Belongs to the major facilitator superfamily. Proton-dependent oligopeptide transporter (POT/PTR) (TC 2.A.17) family. As to expression, expressed in flowers and siliques.

The protein resides in the membrane. Its function is as follows. Involved in abscisic acid transport. The polypeptide is Protein NRT1/ PTR FAMILY 4.5 (NPF4.5) (Arabidopsis thaliana (Mouse-ear cress)).